A 63-amino-acid polypeptide reads, in one-letter code: Gallinacin-4 (63 aa).

Residues 1–19 (MKILCFFIVLLFVAVHGAV) form the signal peptide. The propeptide occupies 20 to 25 (GFSRSP). Intrachain disulfides connect Cys31–Cys59, Cys38–Cys53, and Cys43–Cys60.

The protein belongs to the beta-defensin family. As to expression, strong expression in the bone marrow and testis. Widely expressed. Weak expression in the ovarian stroma, but not expressed in the ovarian follicles.

The protein resides in the secreted. The protein localises to the cytoplasmic granule. Functionally, has bactericidal activity. Potent activity against S.typhimurium and S.entiriditis. This is Gallinacin-4 (GAL4) from Gallus gallus (Chicken).